We begin with the raw amino-acid sequence, 253 residues long: Large ribosomal subunit protein uL4 (253 aa).

This sequence belongs to the universal ribosomal protein uL4 family. In terms of assembly, part of the 50S ribosomal subunit.

Functionally, one of the primary rRNA binding proteins, this protein initially binds near the 5'-end of the 23S rRNA. It is important during the early stages of 50S assembly. It makes multiple contacts with different domains of the 23S rRNA in the assembled 50S subunit and ribosome. In terms of biological role, forms part of the polypeptide exit tunnel. This is Large ribosomal subunit protein uL4 from Methanococcoides burtonii (strain DSM 6242 / NBRC 107633 / OCM 468 / ACE-M).